The chain runs to 292 residues: MNEVKCVFETKLSPGDVAKLNKIVGAVVPVARCTPLISPRDVGLHKHVSHRTDYGKLHMALNMMYPTVFRKLEGNQMVMTPMQHGNIYTIRNTGPFSWEVGDRLAIIPPVFSVEHTTIMQTPSWDLMLPIIVPVQVAKEINIRNLVLTLMSLNRPGRDVELSQEVRRIHFRDVTIDIPATLDTRQLNSVRNVCLALALITNVAPSLLQQYVPRLALAETDMLLVKCYDLLKKLDLPGDGNGGEPPNIPNEIQRMSGLLNLITYVSSIVTENSLFIVNDITPDNKMATCTFTL.

This sequence belongs to the herpesviridae TRX2 protein family. In terms of assembly, interacts with TRX1 and major capisd protein/MCP.

The protein resides in the virion. The protein localises to the host nucleus. In terms of biological role, structural component of the T=16 icosahedral capsid. The capsid is composed of pentamers and hexamers of major capsid protein/MCP, which are linked together by heterotrimers called triplexes. These triplexes are formed by a single molecule of triplex protein 1/TRX1 and two copies of triplex protein 2/TRX2. Additionally, TRX1 is required for efficient transport of TRX2 to the nucleus, which is the site of capsid assembly. This Elephas maximus (Indian elephant) protein is Triplex capsid protein 2.